Reading from the N-terminus, the 243-residue chain is Carboxy-S-adenosyl-L-methionine synthase (243 aa).

S-adenosyl-L-methionine is bound by residues tyrosine 40, glycine 65–serine 67, aspartate 90–asparagine 91, aspartate 118–isoleucine 119, asparagine 133, and arginine 200.

This sequence belongs to the class I-like SAM-binding methyltransferase superfamily. Cx-SAM synthase family. As to quaternary structure, homodimer.

It catalyses the reaction prephenate + S-adenosyl-L-methionine = carboxy-S-adenosyl-L-methionine + 3-phenylpyruvate + H2O. In terms of biological role, catalyzes the conversion of S-adenosyl-L-methionine (SAM) to carboxy-S-adenosyl-L-methionine (Cx-SAM). This is Carboxy-S-adenosyl-L-methionine synthase from Shewanella sp. (strain W3-18-1).